We begin with the raw amino-acid sequence, 701 residues long: CRS2-associated factor 1, chloroplastic (701 aa).

Residues methionine 1–arginine 77 constitute a chloroplast transit peptide. CRM domains lie at glutamate 183 to isoleucine 279 and aspartate 301 to leucine 397. Positions glycine 581 to phenylalanine 603 are CRS2 binding.

In terms of assembly, interacts with CRS2 and RNA. Part of large ribonucleo-protein complexes that include group IIB introns, CRS2 and CAF1.

It is found in the plastid. Its subcellular location is the chloroplast stroma. Functionally, required for the splicing of group IIB introns in chloroplasts. Forms splicing particles with CRS2. Interacts with RNA and confers intron specificity of the splicing particles. In Oryza sativa subsp. japonica (Rice), this protein is CRS2-associated factor 1, chloroplastic.